The following is a 248-amino-acid chain: Tyrosine recombinase XerD-like (248 aa).

The Core-binding (CB) domain maps to 1–72 (MKSYIEPFIA…TANQFLYYLY (72 aa)). A Tyr recombinase domain is found at 85–248 (DTMKVMRTEK…PVTLEKYYKS (164 aa)). Residues Lys-149 and Arg-213 contribute to the active site. The O-(3'-phospho-DNA)-tyrosine intermediate role is filled by Tyr-245.

This sequence belongs to the 'phage' integrase family. XerD-like subfamily.

It localises to the cytoplasm. Its function is as follows. Putative tyrosine recombinase. Not involved in the cutting and rejoining of the recombining DNA molecules on dif(SL) site. The sequence is that of Tyrosine recombinase XerD-like from Streptococcus pyogenes serotype M6 (strain ATCC BAA-946 / MGAS10394).